The primary structure comprises 171 residues: Secretion monitor (171 aa).

The N-terminal stretch at 1–30 (MIGILNRWRQFGRRYFWPHLLLGMVAASLG) is a signal peptide.

It belongs to the SecM family.

It is found in the cytoplasm. The protein resides in the cytosol. The protein localises to the periplasm. Regulates secA expression by translational coupling of the secM secA operon. Translational pausing at a specific Pro residue 5 residues before the end of the protein may allow disruption of a mRNA repressor helix that normally suppresses secA translation initiation. This is Secretion monitor from Pectobacterium atrosepticum (strain SCRI 1043 / ATCC BAA-672) (Erwinia carotovora subsp. atroseptica).